Here is a 38-residue protein sequence, read N- to C-terminus: Potassium channel toxin alpha-KTx 2.10 (38 aa).

Intrachain disulfides connect Cys7–Cys29, Cys13–Cys34, and Cys17–Cys36.

In terms of tissue distribution, expressed by the venom gland.

The protein localises to the secreted. Functionally, blocks human voltage-gated potassium (Kv) channel Kv1.2/KCNA2. Does not inhibit human Kv1.1/KCNA1 at 100nM concentration. The sequence is that of Potassium channel toxin alpha-KTx 2.10 from Centruroides bonito (Scorpion).